The sequence spans 380 residues: Crotonobetainyl-CoA reductase (380 aa).

The protein belongs to the acyl-CoA dehydrogenase family. As to quaternary structure, homotetramer. The cofactor is FAD.

It is found in the cytoplasm. The catalysed reaction is 4-(trimethylamino)butanoyl-CoA + oxidized [electron-transfer flavoprotein] + H(+) = crotonobetainyl-CoA + reduced [electron-transfer flavoprotein]. It functions in the pathway amine and polyamine metabolism; carnitine metabolism. Its function is as follows. Catalyzes the reduction of crotonobetainyl-CoA to gamma-butyrobetainyl-CoA. In Salmonella arizonae (strain ATCC BAA-731 / CDC346-86 / RSK2980), this protein is Crotonobetainyl-CoA reductase.